Here is a 336-residue protein sequence, read N- to C-terminus: Flavonoid 4'-O-methyltransferase 3 (336 aa).

S-adenosyl-L-methionine-binding residues include tyrosine 140 and aspartate 203. The active-site Proton acceptor is the histidine 241.

This sequence belongs to the class I-like SAM-binding methyltransferase superfamily. Cation-independent O-methyltransferase family. As to quaternary structure, homodimer. Expressed in leaves.

It carries out the reaction scutellarein 7-methyl ether + S-adenosyl-L-methionine = ladanein + S-adenosyl-L-homocysteine + H(+). The catalysed reaction is cirsimaritin + S-adenosyl-L-methionine = salvigenin + S-adenosyl-L-homocysteine + H(+). The enzyme catalyses cirsiliol + S-adenosyl-L-methionine = eupatorin + S-adenosyl-L-homocysteine + H(+). It catalyses the reaction genkwanin + S-adenosyl-L-methionine = apigenin 4',7-dimethyl ether + S-adenosyl-L-homocysteine. It participates in flavonoid metabolism. With respect to regulation, substrate inhibition by genkwanin (GENK) at concentrations above 2.5 mM. Functionally, flavonoid 4'-O-methyltransferase involved in the biosynthesis of polymethoxylated flavonoids natural products such as nevadensin and salvigenin, aroma compounds which contribute to the flavor of sweet basil, and exhibit pharmacological activities such as anti-allergic, anti-oxidant, antibacterial, anti-proliferative, and anti-inflammatory effects. Catalyzes S-adenosylmethionine-dependent regioselective 4'-O-methylation of flavonoids; active on various hydroxylated flavonoid substrates, including scutellarein-7-methyl ether (SCU7Me) and cirsimaritin (CIRM), and, with a lower efficiency, hispidulin, ladanein (LAD), cirsioliol (CIRL) and genkwanin (GENK). The polypeptide is Flavonoid 4'-O-methyltransferase 3 (Ocimum basilicum (Sweet basil)).